A 346-amino-acid polypeptide reads, in one-letter code: Phosphate acyltransferase (346 aa).

This sequence belongs to the PlsX family. In terms of assembly, homodimer. Probably interacts with PlsY.

Its subcellular location is the cytoplasm. It carries out the reaction a fatty acyl-[ACP] + phosphate = an acyl phosphate + holo-[ACP]. Its pathway is lipid metabolism; phospholipid metabolism. Its function is as follows. Catalyzes the reversible formation of acyl-phosphate (acyl-PO(4)) from acyl-[acyl-carrier-protein] (acyl-ACP). This enzyme utilizes acyl-ACP as fatty acyl donor, but not acyl-CoA. In Deinococcus geothermalis (strain DSM 11300 / CIP 105573 / AG-3a), this protein is Phosphate acyltransferase.